Here is a 149-residue protein sequence, read N- to C-terminus: Large ribosomal subunit protein bL9 (149 aa).

Residue K89 is modified to N6-acetyllysine.

This sequence belongs to the bacterial ribosomal protein bL9 family.

In terms of biological role, binds to the 23S rRNA. The chain is Large ribosomal subunit protein bL9 from Shigella boydii serotype 18 (strain CDC 3083-94 / BS512).